We begin with the raw amino-acid sequence, 132 residues long: MRHSVLSISFAVALFLECYTPSTAIPIGKMDDVALEQDTLDSLLRVEVSENSPDSVRGRSSKIVLLADSGLWMNLNRGLPLYKLIAAAAGPDRALTLDRREAGQDLSPSISIVRRDTMRCMVGRVYRPCWEV.

An N-terminal signal peptide occupies residues 1-24 (MRHSVLSISFAVALFLECYTPSTA). Cys-120 and Cys-129 are joined by a disulfide.

The protein belongs to the melanin-concentrating hormone family. Pituitary gland. Produced in neurons of lateral basal hypothalamus which project both to the brain and to the neural lobe of the pituitary gland from where MCH is released.

Functionally, plays a role in skin pigmentation by antagonizing the action of melanotropin alpha. Induces melanin concentration within the melanophores. May participate in the control of the hypothalamo-pituitary adrenal gland axis by inhibiting the release of ACTH. This chain is Pro-MCH 1 (mch1), found in Oncorhynchus mykiss (Rainbow trout).